The sequence spans 394 residues: Phosphopentomutase (394 aa).

Positions 15, 288, 293, 329, 330, and 341 each coordinate Mn(2+).

This sequence belongs to the phosphopentomutase family. Mn(2+) serves as cofactor.

It localises to the cytoplasm. It carries out the reaction 2-deoxy-alpha-D-ribose 1-phosphate = 2-deoxy-D-ribose 5-phosphate. The catalysed reaction is alpha-D-ribose 1-phosphate = D-ribose 5-phosphate. The protein operates within carbohydrate degradation; 2-deoxy-D-ribose 1-phosphate degradation; D-glyceraldehyde 3-phosphate and acetaldehyde from 2-deoxy-alpha-D-ribose 1-phosphate: step 1/2. In terms of biological role, isomerase that catalyzes the conversion of deoxy-ribose 1-phosphate (dRib-1-P) and ribose 1-phosphate (Rib-1-P) to deoxy-ribose 5-phosphate (dRib-5-P) and ribose 5-phosphate (Rib-5-P), respectively. This is Phosphopentomutase from Bacillus pumilus (strain SAFR-032).